The chain runs to 153 residues: 6,7-dimethyl-8-ribityllumazine synthase (153 aa).

5-amino-6-(D-ribitylamino)uracil-binding positions include Phe21, 55–57 (AFE), and 79–81 (TVI). 84–85 (AT) serves as a coordination point for (2S)-2-hydroxy-3-oxobutyl phosphate. His87 acts as the Proton donor in catalysis. 5-amino-6-(D-ribitylamino)uracil is bound at residue Phe112. Residue Arg126 participates in (2S)-2-hydroxy-3-oxobutyl phosphate binding.

The protein belongs to the DMRL synthase family. In terms of assembly, forms an icosahedral capsid composed of 60 subunits, arranged as a dodecamer of pentamers.

The catalysed reaction is (2S)-2-hydroxy-3-oxobutyl phosphate + 5-amino-6-(D-ribitylamino)uracil = 6,7-dimethyl-8-(1-D-ribityl)lumazine + phosphate + 2 H2O + H(+). It participates in cofactor biosynthesis; riboflavin biosynthesis; riboflavin from 2-hydroxy-3-oxobutyl phosphate and 5-amino-6-(D-ribitylamino)uracil: step 1/2. Catalyzes the formation of 6,7-dimethyl-8-ribityllumazine by condensation of 5-amino-6-(D-ribitylamino)uracil with 3,4-dihydroxy-2-butanone 4-phosphate. This is the penultimate step in the biosynthesis of riboflavin. The protein is 6,7-dimethyl-8-ribityllumazine synthase of Bacillus cereus (strain AH187).